The following is a 451-amino-acid chain: UPF0210 protein NGO_1297 (451 aa).

It belongs to the UPF0210 family. As to quaternary structure, homodimer.

This is UPF0210 protein NGO_1297 from Neisseria gonorrhoeae (strain ATCC 700825 / FA 1090).